A 761-amino-acid polypeptide reads, in one-letter code: Phosphoribosylformylglycinamidine synthase subunit PurL (761 aa).

Residue His-49 is part of the active site. ATP is bound by residues Tyr-52 and Lys-92. A Mg(2+)-binding site is contributed by Glu-94. Residues 95–98 (SHNH) and Arg-117 contribute to the substrate site. His-96 acts as the Proton acceptor in catalysis. Asp-118 is a Mg(2+) binding site. Position 241 (Gln-241) interacts with substrate. Position 269 (Asp-269) interacts with Mg(2+). Substrate is bound at residue 318–320 (ESQ). Asn-502 and Gly-539 together coordinate ATP. Asn-540 contributes to the Mg(2+) binding site. Residue Ser-542 participates in substrate binding.

Belongs to the FGAMS family. In terms of assembly, monomer. Part of the FGAM synthase complex composed of 1 PurL, 1 PurQ and 2 PurS subunits.

The protein localises to the cytoplasm. The catalysed reaction is N(2)-formyl-N(1)-(5-phospho-beta-D-ribosyl)glycinamide + L-glutamine + ATP + H2O = 2-formamido-N(1)-(5-O-phospho-beta-D-ribosyl)acetamidine + L-glutamate + ADP + phosphate + H(+). The protein operates within purine metabolism; IMP biosynthesis via de novo pathway; 5-amino-1-(5-phospho-D-ribosyl)imidazole from N(2)-formyl-N(1)-(5-phospho-D-ribosyl)glycinamide: step 1/2. Its function is as follows. Part of the phosphoribosylformylglycinamidine synthase complex involved in the purines biosynthetic pathway. Catalyzes the ATP-dependent conversion of formylglycinamide ribonucleotide (FGAR) and glutamine to yield formylglycinamidine ribonucleotide (FGAM) and glutamate. The FGAM synthase complex is composed of three subunits. PurQ produces an ammonia molecule by converting glutamine to glutamate. PurL transfers the ammonia molecule to FGAR to form FGAM in an ATP-dependent manner. PurS interacts with PurQ and PurL and is thought to assist in the transfer of the ammonia molecule from PurQ to PurL. The chain is Phosphoribosylformylglycinamidine synthase subunit PurL from Chlorobium luteolum (strain DSM 273 / BCRC 81028 / 2530) (Pelodictyon luteolum).